The sequence spans 374 residues: MRSSDCGAVLAWSVKMHRWPVWASCIAYSILSLLRTSPIQTTSGDWAIAFCTPMIRVHGDMRRINLPEMSAEEVGNMVTSVMNDHQRKIYQQNLEVDFSFELPNVARFRVNAFNTGRGPAAVFRTIPSTVLSLEELKAPSIFQKIAESPRGMVLVTGPTGSGKSTTLAAMINYINETQPAHILTIEDPIEFVHQSKKSLINQRELHQHTLSFANALSSALREDPDVILVGEMRDPETIGLALTAAETGHLVFGTLHTTGAAKTVDRIVDVFPAGEKEMVRSMLSESLTAVISQNLLKTHDGNGRVASHEILIANPAVRNLIRENKITQINSVLQTGQASGMQTMDQSLQSLVRQGLIAPEAARRRAQNSESMSF.

Residue 157-164 (GPTGSGKS) participates in ATP binding.

The protein belongs to the GSP E family.

The protein localises to the cytoplasm. In terms of biological role, may be involved in pilus retraction. This is Twitching motility protein (pilT) from Neisseria gonorrhoeae.